We begin with the raw amino-acid sequence, 457 residues long: Argininosuccinate lyase (457 aa).

It belongs to the lyase 1 family. Argininosuccinate lyase subfamily.

The protein localises to the cytoplasm. The catalysed reaction is 2-(N(omega)-L-arginino)succinate = fumarate + L-arginine. The protein operates within amino-acid biosynthesis; L-arginine biosynthesis; L-arginine from L-ornithine and carbamoyl phosphate: step 3/3. The protein is Argininosuccinate lyase of Salmonella arizonae (strain ATCC BAA-731 / CDC346-86 / RSK2980).